The following is a 164-amino-acid chain: Cyclic pyranopterin monophosphate synthase (164 aa).

Substrate-binding positions include 75 to 77 (MCH) and 116 to 117 (ME). Asp131 is a catalytic residue.

It belongs to the MoaC family. In terms of assembly, homohexamer; trimer of dimers.

The enzyme catalyses (8S)-3',8-cyclo-7,8-dihydroguanosine 5'-triphosphate = cyclic pyranopterin phosphate + diphosphate. The protein operates within cofactor biosynthesis; molybdopterin biosynthesis. Catalyzes the conversion of (8S)-3',8-cyclo-7,8-dihydroguanosine 5'-triphosphate to cyclic pyranopterin monophosphate (cPMP). In Staphylococcus aureus (strain bovine RF122 / ET3-1), this protein is Cyclic pyranopterin monophosphate synthase.